Here is a 131-residue protein sequence, read N- to C-terminus: Lysozyme C (131 aa).

In terms of domain architecture, C-type lysozyme spans 2–131; it reads KIYEQCELAR…VSQWIKGCKL (130 aa). Cystine bridges form between Cys-7/Cys-129, Cys-31/Cys-117, Cys-66/Cys-82, and Cys-78/Cys-96. Catalysis depends on residues Glu-36 and Asp-54.

It belongs to the glycosyl hydrolase 22 family. As to quaternary structure, monomer.

It localises to the secreted. The catalysed reaction is Hydrolysis of (1-&gt;4)-beta-linkages between N-acetylmuramic acid and N-acetyl-D-glucosamine residues in a peptidoglycan and between N-acetyl-D-glucosamine residues in chitodextrins.. Lysozymes have primarily a bacteriolytic function; those in tissues and body fluids are associated with the monocyte-macrophage system and enhance the activity of immunoagents. Has strong bacteriolytic activity against M.luteus and V.cholerae, weak bacteriolytic activity against P.aeruginosa and no activity against A.hydrophila. In Pelodiscus sinensis (Chinese softshell turtle), this protein is Lysozyme C (LYZ).